The sequence spans 171 residues: O-acetyl-ADP-ribose deacetylase 1 (171 aa).

Positions 1-171 (MKKITVIQGD…NYDLYLKLLN (171 aa)) constitute a Macro domain. Residues 10–11 (DI), N24, 32–34 (GVD), and 121–125 (STGIY) each bind substrate. Catalysis depends on D34, which acts as the Proton acceptor.

Belongs to the MacroD-type family. YmdB subfamily. Homodimer. Interacts with RNase III.

The catalysed reaction is 3''-O-acetyl-ADP-D-ribose + H2O = ADP-D-ribose + acetate + H(+). The enzyme catalyses 2''-O-acetyl-ADP-D-ribose + H2O = ADP-D-ribose + acetate + H(+). Deacetylates O-acetyl-ADP ribose to yield ADP-ribose and free acetate. Down-regulates ribonuclease 3 (RNase III) activity. Acts by interacting directly with the region of the ribonuclease that is required for dimerization/activation. This Pantoea vagans (strain C9-1) (Pantoea agglomerans (strain C9-1)) protein is O-acetyl-ADP-ribose deacetylase 1.